We begin with the raw amino-acid sequence, 624 residues long: Probable potassium transport system protein Kup 1 (624 aa).

Helical transmembrane passes span 10–30 (LALG…LYAL), 48–68 (LSLI…MIIF), 94–114 (PLFY…GMLT), 133–153 (LYPY…SLQA), 159–179 (IGYL…ILGI), 210–230 (FLLG…ADIG), 242–262 (FFIA…NLIV), 270–290 (PFFM…ATVA), 331–351 (IYVP…CLAF), 363–383 (IAVN…AVSI), 388–408 (TFNV…FLGA), and 413–433 (FITG…IMYS).

This sequence belongs to the HAK/KUP transporter (TC 2.A.72) family.

It localises to the cell inner membrane. The enzyme catalyses K(+)(in) + H(+)(in) = K(+)(out) + H(+)(out). Transport of potassium into the cell. Likely operates as a K(+):H(+) symporter. This is Probable potassium transport system protein Kup 1 from Legionella pneumophila subsp. pneumophila (strain Philadelphia 1 / ATCC 33152 / DSM 7513).